Consider the following 1191-residue polypeptide: MPSEGSQQPSLDSFFKRKNPRVEPYSRTGNNAIIDLTDSPPNKKIKLDDEGSQKNRSMTQTSSSYFKGHPTARPLSVDKRLPRKPSAAIQAYKLQDVIPPQPSHSGLAFETCSLVPQASFVPDSQPEPSASPAPQRTTEQLKRHEEWKTRILAMSGSFRRKRSLALDEAVAAEAREAAGLEDEGTPFDGSDGDDYKSESEKNAEEVGKQLKKYVAKELAGKGKSKGKKKEEIGPSGLAYTPLEKQFMEIKEQNRDVLLLMEVGYKYKFHGEDAKTASRELGIVAFPNRNFFTASIPTHRLHIHVKKLLSLGYKVGVITQTETAALKKIGDNRNAPFARKLTHLFTAATYVEDPSLSSSSSSSSSVRFDDPVVPGTAPPPTNALVAIVEQPVDRASDDRVKVGLVCVVPGTGDITWDEFDDSQIRTELETRLAHLSPAELLLPKQRLSKATEKVLTYFAGEPKHRGRNAVRIERIDNIPEYDAAFDFLTNFYHCKEHKATVSKGDVNDERHLMTEGNKQWSLQPKLSQDGADISLDEEIYLASGVSSSKAILTLVDFPKQVVISMAVAIRYMKRFGLENAFKHTSSFVRFANRSHMLLSSNTLANLEIYQNQTDGGLYGSLIWLLDHCKTRMGKRLLREWVGRPLLDVAALKARADAIEEIMENNSYHMEKLRSLLINMPDLVRGLTRVQYGKATPNELATLLITLVRLASEFKPNMGNVFRSCLLNNIPNTLPTILDTSQRFLNALNLKQARENDVANLWADPDRFPDIQDVKDCISVCEMELNEHLMELRKILKKPTLRYITVSGIEYLVEVPIRDTKIVPAQWMKISATRTVNRYHTPKILAITKERTQHLEKLSIVAREAFIAFQSEVAEYHELVVVSKQIAVIDCLMSLAQTAAASGYCKPKFVAEPELKILAGRHPMVEMLREESYVPFDIHFSKEEGTTKIITGPNMAGKSSTVRAMALIVCMAQIGSFVPAASVTLSVHDSVQTRMGASDEIGRGKSTFMVELSETSDILQTITPRSLVVLDELGRGTSTYDGIAIAYATLSHIAEIGCNTLFVTHYPTVAQDLAREKPDKISNWHMSFDEIQMPDGGAEITFLYQLTRGLQEASFGVWCARLAGLPKPILDTAQMRSSSLKAETQERLRGIVARRVGWMLHNLFDNKTSSSQVLRNVEMLHNSLSSSSISFSQ.

Composition is skewed to polar residues over residues 1 to 11 and 54 to 65; these read MPSEGSQQPSL and KNRSMTQTSSSY. Disordered regions lie at residues 1–82, 118–148, and 175–203; these read MPSE…KRLP, ASFV…EEWK, and REAA…EKNA. The segment covering 122–135 has biased composition (low complexity); the sequence is PDSQPEPSASPAPQ. Basic and acidic residues-rich tracts occupy residues 139-148 and 193-203; these read EQLKRHEEWK and DDYKSESEKNA. Residues 233 to 347 are mispair-binding domain; that stretch reads GPSGLAYTPL…RKLTHLFTAA (115 aa). 950–957 is an ATP binding site; it reads GPNMAGKS.

This sequence belongs to the DNA mismatch repair MutS family. MSH3 subfamily. In terms of assembly, heterodimer consisting of MSH2-MSH3 (MutS beta). Forms a ternary complex with MutL alpha (MLH1-PMS1).

The protein resides in the nucleus. Functionally, component of the post-replicative DNA mismatch repair system (MMR). Heterodimerizes with MSH2 to form MutS beta, which binds to DNA mismatches thereby initiating DNA repair. MSH3 provides substrate-binding and substrate specificity to the complex. When bound, the MutS beta heterodimer bends the DNA helix and shields approximately 20 base pairs. Acts mainly to repair insertion-deletion loops (IDLs) from 2 to 13 nucleotides in size, but can also repair base-base and single insertion-deletion mismatches that occur during replication. After mismatch binding, forms a ternary complex with the MutL alpha heterodimer, which is thought to be responsible for directing the downstream MMR events, including strand discrimination, excision, and resynthesis. ATP binding and hydrolysis play a pivotal role in mismatch repair functions. This Cryptococcus neoformans var. neoformans serotype D (strain JEC21 / ATCC MYA-565) (Filobasidiella neoformans) protein is DNA mismatch repair protein MSH3 (MSH3).